Reading from the N-terminus, the 71-residue chain is DNA gyrase inhibitor YacG (71 aa).

Positions 7, 10, 26, and 30 each coordinate Zn(2+).

Belongs to the DNA gyrase inhibitor YacG family. Interacts with GyrB. It depends on Zn(2+) as a cofactor.

Inhibits all the catalytic activities of DNA gyrase by preventing its interaction with DNA. Acts by binding directly to the C-terminal domain of GyrB, which probably disrupts DNA binding by the gyrase. This Shewanella amazonensis (strain ATCC BAA-1098 / SB2B) protein is DNA gyrase inhibitor YacG.